The chain runs to 490 residues: MRIAILGRPNVGKSSLFNRLCKRSLAIVNSQEGTTRDRLYGEIRAWDSIIHVIDTGGVDQESTDRFQKQIHQQALAAAEEASVLLLVVDIRCGITKQDEELAKRLLPLKKPLILVMNKADSQQDLQRIHEFYGLGISDMIATSASHDKHIDLLLERIRQIAQIPVPSVEEQDAVQEDELPSEEAAISLHAFADETLFENESLSQEEASFLEELVAQTATPAPVDRPLKVALIGHPNVGKSSIINALLKEERCITDNSPGTTRDNIDVAYTHNNKEYVFIDTAGLRKTKSIKNSVEWMSSSRTEKAISRTDICLLVIDATQQLSYQDKRILSMIARYKKPHVILVNKWDLMFGVRMEHYVQDLRKMDPYIGQARILCISAKQRRNLLQIFSAIDDVYTIATTKLSTSLVNKVLASAMQRHHPQVINGKRLRIYYAIHKTTTPFTFLLFINSNSLLTKPYELYLKNTLKAAFNLYRVPFDLEYKAKPARKSN.

EngA-type G domains are found at residues 1–165 (MRIA…QIPV) and 227–400 (LKVA…TIAT). Residues 7–14 (GRPNVGKS), 54–58 (DTGGV), 117–120 (NKAD), 233–240 (GHPNVGKS), 280–284 (DTAGL), and 345–348 (NKWD) each bind GTP. A KH-like domain is found at 401–485 (TKLSTSLVNK…PFDLEYKAKP (85 aa)).

Belongs to the TRAFAC class TrmE-Era-EngA-EngB-Septin-like GTPase superfamily. EngA (Der) GTPase family. Associates with the 50S ribosomal subunit.

Functionally, GTPase that plays an essential role in the late steps of ribosome biogenesis. This chain is GTPase Der, found in Chlamydia trachomatis serovar A (strain ATCC VR-571B / DSM 19440 / HAR-13).